The chain runs to 282 residues: Protein NEOXANTHIN-DEFICIENT 1 (282 aa).

Its function is as follows. Required for neoxanthin biosynthesis. Probably not involved directly in the enzymatic conversion of violaxanthin to neoxanthin. Is necessary but not sufficient for neoxanthin synthesis. This chain is Protein NEOXANTHIN-DEFICIENT 1, found in Arabidopsis thaliana (Mouse-ear cress).